A 200-amino-acid chain; its full sequence is Probable nicotinate-nucleotide adenylyltransferase (200 aa).

Belongs to the NadD family.

It catalyses the reaction nicotinate beta-D-ribonucleotide + ATP + H(+) = deamido-NAD(+) + diphosphate. The protein operates within cofactor biosynthesis; NAD(+) biosynthesis; deamido-NAD(+) from nicotinate D-ribonucleotide: step 1/1. In terms of biological role, catalyzes the reversible adenylation of nicotinate mononucleotide (NaMN) to nicotinic acid adenine dinucleotide (NaAD). The sequence is that of Probable nicotinate-nucleotide adenylyltransferase from Lachnoclostridium phytofermentans (strain ATCC 700394 / DSM 18823 / ISDg) (Clostridium phytofermentans).